Reading from the N-terminus, the 272-residue chain is Undecaprenyl-diphosphatase (272 aa).

Transmembrane regions (helical) follow at residues 4–24, 45–65, 89–109, 115–135, 152–174, 189–209, 225–245, and 251–271; these read IHSL…EFLP, AETF…VMFW, LTLG…LVFH, LFNP…LIAA, TYRQ…FSRS, YAAS…ATAL, MFAV…KTFL, and ISFI…YVVF.

It belongs to the UppP family.

It localises to the cell inner membrane. It carries out the reaction di-trans,octa-cis-undecaprenyl diphosphate + H2O = di-trans,octa-cis-undecaprenyl phosphate + phosphate + H(+). In terms of biological role, catalyzes the dephosphorylation of undecaprenyl diphosphate (UPP). Confers resistance to bacitracin. The protein is Undecaprenyl-diphosphatase of Citrobacter koseri (strain ATCC BAA-895 / CDC 4225-83 / SGSC4696).